The sequence spans 238 residues: Large ribosomal subunit protein uL2 (238 aa).

The interval 201–238 is disordered; sequence FGGGGHQHPGRPKTIARGTSPGRTVGHVAARQTGRSRK.

The protein belongs to the universal ribosomal protein uL2 family. In terms of assembly, part of the 50S ribosomal subunit. Forms a bridge to the 30S subunit in the 70S ribosome.

Functionally, one of the primary rRNA binding proteins. Required for association of the 30S and 50S subunits to form the 70S ribosome, for tRNA binding and peptide bond formation. It has been suggested to have peptidyltransferase activity; this is somewhat controversial. Makes several contacts with the 16S rRNA in the 70S ribosome. The sequence is that of Large ribosomal subunit protein uL2 from Methanoregula boonei (strain DSM 21154 / JCM 14090 / 6A8).